The primary structure comprises 101 residues: Large ribosomal subunit protein uL24 (101 aa).

The protein belongs to the universal ribosomal protein uL24 family. In terms of assembly, part of the 50S ribosomal subunit.

Functionally, one of two assembly initiator proteins, it binds directly to the 5'-end of the 23S rRNA, where it nucleates assembly of the 50S subunit. Its function is as follows. One of the proteins that surrounds the polypeptide exit tunnel on the outside of the subunit. The polypeptide is Large ribosomal subunit protein uL24 (Streptococcus gordonii (strain Challis / ATCC 35105 / BCRC 15272 / CH1 / DL1 / V288)).